The chain runs to 3364 residues: Salivary gland surface protein 1 (3364 aa).

2 beta-propeller regions span residues 1–344 and 705–1216; these read MLRI…VVDA and FEQE…LKAL. N-linked (GlcNAc...) asparagine glycosylation occurs at Asn59. Disulfide bonds link Cys251–Cys297 and Cys1128–Cys1139. Residues 345–2733 form a rhs/YD-repeats region; the sequence is VEPKLDQGSP…PVSQIDPDGQ (2389 aa). N-linked (GlcNAc...) asparagine glycosylation is present at Asn1149. The tract at residues 1345–1494 is carbohydrate-binding module (CBM); that stretch reads NQELVQFLGF…VHVDHVRLSP (150 aa). Residues 1575–1715 are lectin carbohydrate-recognition domain (lectin-CRD); the sequence is HSWVESFSPY…VGIKDVIVME (141 aa). The interval 2225 to 2304 is wedge domain; it reads HDKCDQNLIP…SEKMLEQGYP (80 aa). Disulfide bonds link Cys2253-Cys2285 and Cys2407-Cys2421. Helical transmembrane passes span 2734 to 2754, 2774 to 2794, 2805 to 2825, 2844 to 2864, and 2878 to 2898; these read IAVT…LGAA, IGLF…AATF, MIAG…LGAA, WNGL…FVGI, and MIYA…GGGM. A tox-SGS region spans residues 3126–3216; it reads YSPDSDGNQI…ARIAPAALRN (91 aa).

Probably cleaved at the C-terminus. Female saliva (at protein level). Female salivary gland (at protein level). Not detected in female carcass without salivary glands. Not detected in male tissues.

It localises to the cell membrane. The protein localises to the secreted. Functionally, (Microbial infection) Facilitates, but is not essential for, invasion of salivary glands by Plasmodium gallinaceum. Plays a role in Plasmodium gallinaceum oocyst development in mosquito midgut. In terms of biological role, (Microbial infection) Probably facilitates Zika virus replication in salivary glands. This Aedes aegypti (Yellowfever mosquito) protein is Salivary gland surface protein 1.